Consider the following 239-residue polypeptide: Ribosomal RNA small subunit methyltransferase G (239 aa).

S-adenosyl-L-methionine contacts are provided by residues glycine 78, phenylalanine 83, 129–130 (AE), and arginine 148.

The protein belongs to the methyltransferase superfamily. RNA methyltransferase RsmG family.

It localises to the cytoplasm. Its function is as follows. Specifically methylates the N7 position of a guanine in 16S rRNA. The chain is Ribosomal RNA small subunit methyltransferase G from Clostridium perfringens (strain 13 / Type A).